Consider the following 181-residue polypeptide: I-Kappa-B like protein C2 (181 aa).

ANK repeat units follow at residues 54–86, 91–121, and 125–154; these read DGKXCMHIVVSQDKVDPINKLMLLMKWGADINS, DGNTVLHIAVLTNNYEVAKWLCQQPGVDMEI, and ARKTPYQIACDRANTRMMDLLXKNGARCDV.

The protein belongs to the polydnaviridae I-Kappa-B-like protein family.

In terms of biological role, suppresses the host immune response through NF-kappa-B inactivation. Possesses ankyrin repeat domains required for NF-kappa-B binding but lacks the regulatory regions required for dissociation from NF-kappa-B and degradation. Therefore, prevents host NF-kappa-B release and subsequent activation. This Microplitis demolitor (Parasitoid wasp) protein is I-Kappa-B like protein C2 (C2).